The following is an 874-amino-acid chain: Protein Son (874 aa).

Disordered regions lie at residues 1-45 (MTEN…ERPD), 68-98 (RRSN…NIKP), and 120-368 (ELLD…SRDL). Polar residues predominate over residues 12 to 24 (ETPQVAGSQTNPP). The segment covering 70–89 (SNSNELGNNDESGESESSAS) has biased composition (low complexity). Composition is skewed to basic residues over residues 128-147 (KKKK…KKKT) and 162-175 (KHKH…HKDI). Composition is skewed to basic and acidic residues over residues 176–219 (RVKD…KDKF) and 226–277 (SEKE…ERVR). The G-patch domain maps to 705 to 751 (TGGMGMALLQKMGWKPGEGLGRCKTGSLQPLLLDVKLDKRGLVSRDD). The DRBM domain maps to 800–870 (HPVCVLNELT…AALCLRSLGI (71 aa)).

In terms of tissue distribution, expressed in ovarian nurse cells (at protein level).

The protein resides in the nucleus. Functionally, RNA-binding protein that protects nascent transcripts containing intronic transposable sequences, known as INE-1, from being degraded by DIP1. Modulates DIP1 activity by repressing its sumoylation levels. This ensures that intronic sequences will be degradated only after splicing. In the ovaries, regulates germline stem cells (GSCs) self-renewal by repressing the expression of the GSC differentiation-promoting factor Rga. The polypeptide is Protein Son (Drosophila melanogaster (Fruit fly)).